A 1159-amino-acid polypeptide reads, in one-letter code: ATP-dependent helicase/deoxyribonuclease subunit B (1159 aa).

In terms of domain architecture, UvrD-like helicase ATP-binding spans 1-275 (MEFNTYIGRA…TYFNTFYRYN (275 aa)). 8–15 (GRAGTGKS) is a binding site for ATP. In terms of domain architecture, UvrD-like helicase C-terminal spans 269 to 583 (NTFYRYNNDD…SIGTMDLAKV (315 aa)). 4 residues coordinate [4Fe-4S] cluster: C784, C1112, C1115, and C1121.

This sequence belongs to the helicase family. AddB/RexB type 1 subfamily. In terms of assembly, heterodimer of AddA and AddB. It depends on Mg(2+) as a cofactor. [4Fe-4S] cluster serves as cofactor.

Its function is as follows. The heterodimer acts as both an ATP-dependent DNA helicase and an ATP-dependent, dual-direction single-stranded exonuclease. Recognizes the chi site generating a DNA molecule suitable for the initiation of homologous recombination. The AddB subunit has 5' -&gt; 3' nuclease activity but not helicase activity. The sequence is that of ATP-dependent helicase/deoxyribonuclease subunit B from Staphylococcus epidermidis (strain ATCC 35984 / DSM 28319 / BCRC 17069 / CCUG 31568 / BM 3577 / RP62A).